Here is a 247-residue protein sequence, read N- to C-terminus: 2,3-bisphosphoglycerate-dependent phosphoglycerate mutase (247 aa).

Substrate contacts are provided by residues 8-15 (RHGESVWN), 21-22 (TG), R60, 87-90 (ERHY), K98, 114-115 (RR), and 183-184 (GN). The active-site Tele-phosphohistidine intermediate is the H9. Residue E87 is the Proton donor/acceptor of the active site.

This sequence belongs to the phosphoglycerate mutase family. BPG-dependent PGAM subfamily.

It carries out the reaction (2R)-2-phosphoglycerate = (2R)-3-phosphoglycerate. The protein operates within carbohydrate degradation; glycolysis; pyruvate from D-glyceraldehyde 3-phosphate: step 3/5. Catalyzes the interconversion of 2-phosphoglycerate and 3-phosphoglycerate. The polypeptide is 2,3-bisphosphoglycerate-dependent phosphoglycerate mutase (Thermobifida fusca (strain YX)).